Consider the following 156-residue polypeptide: FAD synthase (156 aa).

ATP is bound by residues 9–10 (TF), 14–17 (HPGH), N92, and H119.

It belongs to the archaeal FAD synthase family. As to quaternary structure, homodimer. It depends on a divalent metal cation as a cofactor.

The enzyme catalyses FMN + ATP + H(+) = FAD + diphosphate. The protein operates within cofactor biosynthesis; FAD biosynthesis; FAD from FMN: step 1/1. In terms of biological role, catalyzes the transfer of the AMP portion of ATP to flavin mononucleotide (FMN) to produce flavin adenine dinucleotide (FAD) coenzyme. The protein is FAD synthase of Methanospirillum hungatei JF-1 (strain ATCC 27890 / DSM 864 / NBRC 100397 / JF-1).